The following is a 195-amino-acid chain: Interferon omega-1 (195 aa).

A signal peptide spans methionine 1–glycine 23. Intrachain disulfides connect cysteine 24–cysteine 122 and cysteine 52–cysteine 162.

Belongs to the alpha/beta interferon family.

It is found in the secreted. The polypeptide is Interferon omega-1 (IFNW1) (Bos taurus (Bovine)).